The following is a 2357-amino-acid chain: Myosin-I heavy chain (2357 aa).

The Myosin motor domain occupies Gln-13–Lys-688. Gly-106 to Thr-113 contributes to the ATP binding site. The interval Tyr-579–Asn-586 is actin-binding. The region spanning Leu-691–Ile-720 is the IQ domain. A coiled-coil region spans residues Lys-787–Asp-891. Residues Lys-787–Pro-1076 are binding to talin A. Disordered regions lie at residues Ile-797–Leu-852 and Ala-974–Pro-1112. 2 stretches are compositionally biased toward low complexity: residues Asn-1003–Ser-1025 and Thr-1078–Asn-1106. In terms of domain architecture, MyTH4 1 spans Tyr-1155–Lys-1313. The FERM 1 domain occupies Ile-1318–Ala-1620. The SH3 domain maps to Asn-1618–Ser-1678. A disordered region spans residues Val-1686–Ala-1849. The span at Thr-1706–Ser-1733 shows a compositional bias: pro residues. Low complexity-rich tracts occupy residues Val-1734–Leu-1746 and Ser-1755–Met-1770. A compositionally biased stretch (polar residues) spans Phe-1817–Thr-1828. The MyTH4 2 domain occupies Phe-1894 to Arg-2051. The FERM 2 domain occupies Ser-2060 to Gln-2357.

This sequence belongs to the TRAFAC class myosin-kinesin ATPase superfamily. Myosin family. Monomer. Interacts with talA.

It localises to the cytoplasm. In terms of biological role, myosins are actin-based motor molecules with ATPase activity. Involved in the early steps of phagocytosis and adhesion. This Dictyostelium discoideum (Social amoeba) protein is Myosin-I heavy chain (myoI).